The following is a 151-amino-acid chain: Cytochrome c-type biogenesis protein CcmE (151 aa).

The Cytoplasmic portion of the chain corresponds to 1 to 9; that stretch reads MKGLKKKRR. Residues 10–30 form a helical; Signal-anchor for type II membrane protein membrane-spanning segment; the sequence is IQIITLAFVALAGSTALIGYA. Topologically, residues 31-151 are periplasmic; the sequence is MRDGINFFRS…FQHTEDQPQG (121 aa). 2 residues coordinate heme: H123 and Y127.

Belongs to the CcmE/CycJ family.

It is found in the cell inner membrane. Its function is as follows. Heme chaperone required for the biogenesis of c-type cytochromes. Transiently binds heme delivered by CcmC and transfers the heme to apo-cytochromes in a process facilitated by CcmF and CcmH. The polypeptide is Cytochrome c-type biogenesis protein CcmE (Cereibacter sphaeroides (strain ATCC 17025 / ATH 2.4.3) (Rhodobacter sphaeroides)).